The following is a 262-amino-acid chain: Hydroxyethylthiazole kinase (262 aa).

Substrate is bound at residue methionine 50. Arginine 125 and threonine 171 together coordinate ATP. Residue glycine 198 participates in substrate binding.

It belongs to the Thz kinase family. Requires Mg(2+) as cofactor.

The enzyme catalyses 5-(2-hydroxyethyl)-4-methylthiazole + ATP = 4-methyl-5-(2-phosphooxyethyl)-thiazole + ADP + H(+). It participates in cofactor biosynthesis; thiamine diphosphate biosynthesis; 4-methyl-5-(2-phosphoethyl)-thiazole from 5-(2-hydroxyethyl)-4-methylthiazole: step 1/1. Functionally, catalyzes the phosphorylation of the hydroxyl group of 4-methyl-5-beta-hydroxyethylthiazole (THZ). The protein is Hydroxyethylthiazole kinase of Escherichia coli O6:K15:H31 (strain 536 / UPEC).